Here is a 604-residue protein sequence, read N- to C-terminus: Baculoviral IAP repeat-containing protein 3 (604 aa).

A BIR 1 repeat occupies 29–96 (ELYRMSTYST…RNLYPSCSFI (68 aa)). Residue R130 is modified to Omega-N-methylarginine. At S140 the chain carries Phosphoserine. BIR repeat units follow at residues 169 to 235 (EEDR…CPFV) and 255 to 322 (LAAR…CEYL). Zn(2+) is bound by residues C292, C295, H312, and C319. In terms of domain architecture, CARD spans 439–529 (RESDDVSLIR…MLYKRFFVQQ (91 aa)). The RING-type zinc finger occupies 557–592 (CKVCMDKEVSIVFIPCGHLVVCRDCAPSLRKCPICR).

The protein belongs to the IAP family. As to quaternary structure, interacts with PRSS25; the interaction inhibits apoptotic suppressor activity. The BIR motifs region interacts with TNF receptor associated factors 1 and 2 (TRAF1 and TRAF2) to form a heteromeric complex, which is then recruited to the tumor necrosis factor receptor 2 (TNFR2). Interaction with TRAF2 is required for ubiquitination of IKBKE, degradation of NFKBIA and activation of NF-kappa-B. Interacts with RIP1, RIP2, RIP3, RIP4 and USP19. In terms of processing, auto-ubiquitinated and degraded by the proteasome in apoptotic cells.

It localises to the cytoplasm. It is found in the nucleus. It carries out the reaction S-ubiquitinyl-[E2 ubiquitin-conjugating enzyme]-L-cysteine + [acceptor protein]-L-lysine = [E2 ubiquitin-conjugating enzyme]-L-cysteine + N(6)-ubiquitinyl-[acceptor protein]-L-lysine.. USP19 regulates the stability of BIRC3/c-IAP2 by preventing its ubiquitination. Its function is as follows. Multi-functional protein which regulates not only caspases and apoptosis, but also modulates inflammatory signaling and immunity, mitogenic kinase signaling and cell proliferation, as well as cell invasion and metastasis. Acts as an E3 ubiquitin-protein ligase regulating NF-kappa-B signaling and regulates both canonical and non-canonical NF-kappa-B signaling by acting in opposite directions: acts as a positive regulator of the canonical pathway and suppresses constitutive activation of non-canonical NF-kappa-B signaling. The target proteins for its E3 ubiquitin-protein ligase activity include: RIPK1, RIPK2, RIPK3, RIPK4, CASP3, CASP7, CASP8, IKBKE, TRAF1, and BCL10. Acts as an important regulator of innate immune signaling via regulation of Toll-like receptors (TLRs), Nodlike receptors (NLRs) and RIG-I like receptors (RLRs), collectively referred to as pattern recognition receptors (PRRs). Protects cells from spontaneous formation of the ripoptosome, a large multi-protein complex that has the capability to kill cancer cells in a caspase-dependent and caspase-independent manner. Suppresses ripoptosome formation by ubiquitinating RIPK1 and CASP8. This Canis lupus familiaris (Dog) protein is Baculoviral IAP repeat-containing protein 3 (BIRC3).